The chain runs to 204 residues: Peptide deformylase (204 aa).

Fe cation contacts are provided by Cys-131 and His-174. Glu-175 is an active-site residue. A Fe cation-binding site is contributed by His-178.

It belongs to the polypeptide deformylase family. Fe(2+) is required as a cofactor.

It carries out the reaction N-terminal N-formyl-L-methionyl-[peptide] + H2O = N-terminal L-methionyl-[peptide] + formate. Functionally, removes the formyl group from the N-terminal Met of newly synthesized proteins. Requires at least a dipeptide for an efficient rate of reaction. N-terminal L-methionine is a prerequisite for activity but the enzyme has broad specificity at other positions. The protein is Peptide deformylase of Streptococcus pyogenes serotype M1.